We begin with the raw amino-acid sequence, 644 residues long: UvrABC system protein C (644 aa).

One can recognise a GIY-YIG domain in the interval 47 to 125 (ARPGVYRMLD…IKRYRPPYNV (79 aa)). A UVR domain is found at 235–270 (TAVQKRLGEAMTRAADAMDFEQAAVLRDRLKALTFI).

Belongs to the UvrC family. As to quaternary structure, interacts with UvrB in an incision complex.

The protein resides in the cytoplasm. The UvrABC repair system catalyzes the recognition and processing of DNA lesions. UvrC both incises the 5' and 3' sides of the lesion. The N-terminal half is responsible for the 3' incision and the C-terminal half is responsible for the 5' incision. The chain is UvrABC system protein C from Sphingopyxis alaskensis (strain DSM 13593 / LMG 18877 / RB2256) (Sphingomonas alaskensis).